A 556-amino-acid polypeptide reads, in one-letter code: Potassium-transporting ATPase potassium-binding subunit (556 aa).

10 helical membrane-spanning segments follow: residues 6–26, 65–85, 133–153, 176–196, 249–269, 283–303, 378–398, 419–439, 483–503, and 526–546; these read AGILFALSLALALAAVHVPLG, SVLAFSAVSILFLFGLQLLQG, GLSVQNFVSAAVGMAVAMAFV, LRILLPLSIIGAIILVSGGVI, PTTWTNWVEIFLLSCIAFSLP, AAILAVMAVIATLSLSLMMLF, GLYSMLVLAVITVFVAGLMVG, YFLVTPLIVLIGTAVAMALPG, ALGLAMVFGRFLPIILVLALA, and FVGMVTGVTLILVALTFLPVL.

This sequence belongs to the KdpA family. As to quaternary structure, the system is composed of three essential subunits: KdpA, KdpB and KdpC.

It localises to the cell membrane. Functionally, part of the high-affinity ATP-driven potassium transport (or Kdp) system, which catalyzes the hydrolysis of ATP coupled with the electrogenic transport of potassium into the cytoplasm. This subunit binds the extracellular potassium ions and delivers the ions to the membrane domain of KdpB through an intramembrane tunnel. The polypeptide is Potassium-transporting ATPase potassium-binding subunit (Mycobacterium sp. (strain KMS)).